The primary structure comprises 293 residues: MKKFSIVKHARIFFSITAVVLIVGIVSMFARGFNLGIDFTGGSILDIKFDQPVTVAQVRTVLSDHQLGSSVIQLGSSDQQVESSQSVLIRTGLISDSQRVDVMNDLSNRLGHNEVLRVENVGATVGGDLVKSAVGAVVLSWVLMIIYITIRFELRFALAAIVALIIDVMVTLTWFSVLHLEIDSSFVAALLTVVGYSVNGTIVVFDRIRENLHTHRRNESMGDLVDASIWQTMTRSVYTTLTTLFAVVAIFLFGGETIHNFSFAMLVGFCSGFYTSTFLAGSMWLFFRKKLKR.

6 helical membrane passes run Ala-10–Ala-30, Val-130–Ile-150, Leu-158–Leu-178, Ser-185–Phe-205, Leu-244–Ala-264, and Val-267–Phe-287.

The protein belongs to the SecD/SecF family. SecF subfamily. In terms of assembly, forms a complex with SecD. Part of the essential Sec protein translocation apparatus which comprises SecA, SecYEG and auxiliary proteins SecDF. Other proteins may also be involved.

Its subcellular location is the cell membrane. Its function is as follows. Part of the Sec protein translocase complex. Interacts with the SecYEG preprotein conducting channel. SecDF uses the proton motive force (PMF) to complete protein translocation after the ATP-dependent function of SecA. The protein is Protein translocase subunit SecF of Acidaminococcus fermentans (strain ATCC 25085 / DSM 20731 / CCUG 9996 / CIP 106432 / VR4).